Reading from the N-terminus, the 304-residue chain is Acetyl-coenzyme A carboxylase carboxyl transferase subunit beta (304 aa).

Residues V23–V292 form the CoA carboxyltransferase N-terminal domain. Zn(2+) contacts are provided by C27, C30, C46, and C49. Residues C27 to C49 form a C4-type zinc finger. The interval N284 to A304 is disordered. Residues P295–A304 are compositionally biased toward pro residues.

Belongs to the AccD/PCCB family. Acetyl-CoA carboxylase is a heterohexamer composed of biotin carboxyl carrier protein (AccB), biotin carboxylase (AccC) and two subunits each of ACCase subunit alpha (AccA) and ACCase subunit beta (AccD). Zn(2+) serves as cofactor.

The protein localises to the cytoplasm. It catalyses the reaction N(6)-carboxybiotinyl-L-lysyl-[protein] + acetyl-CoA = N(6)-biotinyl-L-lysyl-[protein] + malonyl-CoA. It functions in the pathway lipid metabolism; malonyl-CoA biosynthesis; malonyl-CoA from acetyl-CoA: step 1/1. Functionally, component of the acetyl coenzyme A carboxylase (ACC) complex. Biotin carboxylase (BC) catalyzes the carboxylation of biotin on its carrier protein (BCCP) and then the CO(2) group is transferred by the transcarboxylase to acetyl-CoA to form malonyl-CoA. This chain is Acetyl-coenzyme A carboxylase carboxyl transferase subunit beta, found in Shigella boydii serotype 4 (strain Sb227).